The primary structure comprises 67 residues: UPF0434 protein Lcho_2556 (67 aa).

It belongs to the UPF0434 family.

In Leptothrix cholodnii (strain ATCC 51168 / LMG 8142 / SP-6) (Leptothrix discophora (strain SP-6)), this protein is UPF0434 protein Lcho_2556.